The sequence spans 459 residues: GTPase Der (459 aa).

EngA-type G domains are found at residues 3–167 and 188–363; these read FTFA…PEPE and IRVA…AVWN. Residues 9 to 16, 56 to 60, 119 to 122, 194 to 201, 241 to 245, and 306 to 309 contribute to the GTP site; these read GRPNVGKS, DTAGL, NKSE, GRPNAGKS, and NKWD. The region spanning 364–448 is the KH-like domain; it reads TRVSTAALNR…PVRITLREKA (85 aa).

Belongs to the TRAFAC class TrmE-Era-EngA-EngB-Septin-like GTPase superfamily. EngA (Der) GTPase family. Associates with the 50S ribosomal subunit.

GTPase that plays an essential role in the late steps of ribosome biogenesis. This chain is GTPase Der, found in Rhodopseudomonas palustris (strain HaA2).